A 497-amino-acid chain; its full sequence is Cobyric acid synthase (497 aa).

The GATase cobBQ-type domain occupies 250–445; the sequence is EVTIAVIRLP…LHGIFNNGPW (196 aa). The Nucleophile role is filled by C331. The active site involves H437.

The protein belongs to the CobB/CobQ family. CobQ subfamily.

It participates in cofactor biosynthesis; adenosylcobalamin biosynthesis. Catalyzes amidations at positions B, D, E, and G on adenosylcobyrinic A,C-diamide. NH(2) groups are provided by glutamine, and one molecule of ATP is hydrogenolyzed for each amidation. The polypeptide is Cobyric acid synthase (Acaryochloris marina (strain MBIC 11017)).